The following is a 156-amino-acid chain: Small ribosomal subunit protein uS7 (156 aa).

This sequence belongs to the universal ribosomal protein uS7 family. In terms of assembly, part of the 30S ribosomal subunit. Contacts proteins S9 and S11.

One of the primary rRNA binding proteins, it binds directly to 16S rRNA where it nucleates assembly of the head domain of the 30S subunit. Is located at the subunit interface close to the decoding center, probably blocks exit of the E-site tRNA. The sequence is that of Small ribosomal subunit protein uS7 from Bacillus licheniformis (strain ATCC 14580 / DSM 13 / JCM 2505 / CCUG 7422 / NBRC 12200 / NCIMB 9375 / NCTC 10341 / NRRL NRS-1264 / Gibson 46).